Reading from the N-terminus, the 70-residue chain is Small ribosomal subunit protein bS21 (70 aa).

It belongs to the bacterial ribosomal protein bS21 family.

The sequence is that of Small ribosomal subunit protein bS21 from Nautilia profundicola (strain ATCC BAA-1463 / DSM 18972 / AmH).